Here is a 194-residue protein sequence, read N- to C-terminus: CASP-like protein 2C2 (194 aa).

The Cytoplasmic portion of the chain corresponds to 1 to 27 (MAAGQPRPPPPPSSVRTERVLRAACAA). Residues 28–48 (MAAAGALLLGFSAETKTVIFV) traverse the membrane as a helical segment. The Extracellular portion of the chain corresponds to 49–58 (QKKAVPKDVQ). A helical membrane pass occupies residues 59-79 (ALWVLIVAAAAAAAYHAAQLA). Over 80–113 (RCLCMDRLAGGGGGCRRLRRAVACATFLLDKGCA) the chain is Cytoplasmic. A helical transmembrane segment spans residues 114 to 134 (YMVLATTVAALQACFVGLLGV). The Extracellular segment spans residues 135 to 152 (EALQWSKLCNIYTRFCEQ). Residues 153 to 173 (AAAGMVCSLVAAAGMAVLSAF) traverse the membrane as a helical segment. Topologically, residues 174 to 194 (SARDLFRRRRPCSPCVQVQQV) are cytoplasmic.

It belongs to the Casparian strip membrane proteins (CASP) family. As to quaternary structure, homodimer and heterodimers.

The protein localises to the cell membrane. This is CASP-like protein 2C2 from Sorghum bicolor (Sorghum).